We begin with the raw amino-acid sequence, 233 residues long: MNKPIIALDFQTYEEVETFLAKFSGETLSVKVGMELFYSNGPIIVEKIKQQHHEIFLDLKLHDIPNTVKSAMIGLAKLGVDMVNVHAAGGKKMMEAAREGLEIGSSSGKRPKIIAVTQLTSTSETDMQTEQLIKTSLLESVMHYSNLSKQAGLDGVVCSALEAEDIKQQNGADFLRVTPGIRLASDAADDQIRVVTPEKARLIGSSNIVVGRSITRANDPVEAYNQVLKEWNA.

Substrate is bound by residues aspartate 9, lysine 31, 58-67, threonine 120, arginine 182, glutamine 191, glycine 211, and arginine 212; that span reads DLKLHDIPNT. Lysine 60 functions as the Proton donor in the catalytic mechanism.

This sequence belongs to the OMP decarboxylase family. Type 1 subfamily. Homodimer.

It catalyses the reaction orotidine 5'-phosphate + H(+) = UMP + CO2. Its pathway is pyrimidine metabolism; UMP biosynthesis via de novo pathway; UMP from orotate: step 2/2. Functionally, catalyzes the decarboxylation of orotidine 5'-monophosphate (OMP) to uridine 5'-monophosphate (UMP). This chain is Orotidine 5'-phosphate decarboxylase, found in Listeria monocytogenes serotype 4b (strain CLIP80459).